Consider the following 822-residue polypeptide: Phenylalanine--tRNA ligase beta subunit (822 aa).

Residues 44-162 form the tRNA-binding domain; that stretch reads LSKNTNLVVG…DQIALGSNAL (119 aa). The disordered stretch occupies residues 201 to 224; the sequence is QSSNNNQETKSTNYKTKNSEDQTN. A B5 domain is found at 430–513; that stretch reads RTNPTISLNL…RLYGCHKLPP (84 aa). Mg(2+) is bound by residues D491, D497, and D501. One can recognise an FDX-ACB domain in the interval 730 to 822; the sequence is PKFPTVIRDL…LIKHFHIEIR (93 aa).

This sequence belongs to the phenylalanyl-tRNA synthetase beta subunit family. Type 1 subfamily. Tetramer of two alpha and two beta subunits. Requires Mg(2+) as cofactor.

Its subcellular location is the cytoplasm. The enzyme catalyses tRNA(Phe) + L-phenylalanine + ATP = L-phenylalanyl-tRNA(Phe) + AMP + diphosphate + H(+). The polypeptide is Phenylalanine--tRNA ligase beta subunit (Onion yellows phytoplasma (strain OY-M)).